Here is a 225-residue protein sequence, read N- to C-terminus: Ribose-5-phosphate isomerase A (225 aa).

The segment at 1–20 is disordered; sequence MKQSGGTEAQKRRAGKQAAD. Residues 32–35, 86–89, and 98–101 contribute to the substrate site; these read TGST, DGAD, and KGGG. Glu-107 functions as the Proton acceptor in the catalytic mechanism. Substrate is bound at residue Lys-125.

It belongs to the ribose 5-phosphate isomerase family. As to quaternary structure, homodimer.

The enzyme catalyses aldehydo-D-ribose 5-phosphate = D-ribulose 5-phosphate. It functions in the pathway carbohydrate degradation; pentose phosphate pathway; D-ribose 5-phosphate from D-ribulose 5-phosphate (non-oxidative stage): step 1/1. Catalyzes the reversible conversion of ribose-5-phosphate to ribulose 5-phosphate. This Natronomonas pharaonis (strain ATCC 35678 / DSM 2160 / CIP 103997 / JCM 8858 / NBRC 14720 / NCIMB 2260 / Gabara) (Halobacterium pharaonis) protein is Ribose-5-phosphate isomerase A.